The sequence spans 213 residues: ATP phosphoribosyltransferase (213 aa).

This sequence belongs to the ATP phosphoribosyltransferase family. Short subfamily. As to quaternary structure, heteromultimer composed of HisG and HisZ subunits.

It localises to the cytoplasm. It carries out the reaction 1-(5-phospho-beta-D-ribosyl)-ATP + diphosphate = 5-phospho-alpha-D-ribose 1-diphosphate + ATP. It participates in amino-acid biosynthesis; L-histidine biosynthesis; L-histidine from 5-phospho-alpha-D-ribose 1-diphosphate: step 1/9. Its function is as follows. Catalyzes the condensation of ATP and 5-phosphoribose 1-diphosphate to form N'-(5'-phosphoribosyl)-ATP (PR-ATP). Has a crucial role in the pathway because the rate of histidine biosynthesis seems to be controlled primarily by regulation of HisG enzymatic activity. The polypeptide is ATP phosphoribosyltransferase (Saccharophagus degradans (strain 2-40 / ATCC 43961 / DSM 17024)).